The primary structure comprises 114 residues: QDAAKGEALFKQCQTCHRADKNMVGPALAGVVGRKAGTAPGFSYSPLNHAAGEAGLVWSQENVVEYLADPNAFLKKFLTDKGQADKATGSTKMTFKLANEQQRKDVAAYLATLK.

Pyrrolidone carboxylic acid is present on glutamine 1. Heme c is bound by residues cysteine 13, cysteine 16, histidine 17, and methionine 93.

The protein belongs to the cytochrome c family. Binds 1 heme c group covalently per subunit.

Its subcellular location is the periplasm. Functionally, cytochrome c2 is found mainly in purple, non-sulfur, photosynthetic bacteria where it functions as the electron donor to the oxidized bacteriochlorophyll in the photophosphorylation pathway. However, it may also have a role in the respiratory chain and is found in some non-photosynthetic bacteria. In Rhodopseudomonas palustris, this protein is Cytochrome c2.